Here is a 376-residue protein sequence, read N- to C-terminus: Transforming growth factor beta-1 proprotein (376 aa).

Positions 1–22 (MRVESLLLALQCLLGFVHYSGA) are cleaved as a signal peptide. The segment at 23 to 68 (LSTCSPLDLELIKRKRIEAIRGQILSKLRLSKEPEVDEEKESQNIP) is straightjacket domain. An arm domain region spans residues 69 to 258 (AELISVYNST…SLPLDGNNSS (190 aa)). 3 N-linked (GlcNAc...) asparagine glycosylation sites follow: asparagine 76, asparagine 125, and asparagine 167. Residues 214 to 238 (DPQKTFQLKIPGLVLVRGDTETLAV) are bowtie tail. A Cell attachment site motif is present at residues 230-232 (RGD). 3 disulfides stabilise this stretch: cysteine 272-cysteine 280, cysteine 308-cysteine 373, and cysteine 312-cysteine 375.

It belongs to the TGF-beta family. As to quaternary structure, latency-associated peptide: Homodimer; disulfide-linked. Latency-associated peptide: Interacts with Transforming growth factor beta-1 (TGF-beta-1) chain; interaction is non-covalent and maintains (TGF-beta-1) in a latent state; each Latency-associated peptide (LAP) monomer interacts with TGF-beta-1 in the other monomer. Transforming growth factor beta-1: Homodimer; disulfide-linked. Transforming growth factor beta-1: Interacts with TGF-beta receptors (tgfbr1 and tgfbr2), leading to signal transduction. Interacts with EFEMP2. Post-translationally, transforming growth factor beta-1 proprotein: The precursor proprotein is cleaved in the Golgi apparatus to form Transforming growth factor beta-1 (TGF-beta-1) and Latency-associated peptide (LAP) chains, which remain non-covalently linked, rendering TGF-beta-1 inactive.

It localises to the secreted. It is found in the extracellular space. The protein localises to the extracellular matrix. In terms of biological role, transforming growth factor beta-1 proprotein: Precursor of the Latency-associated peptide (LAP) and Transforming growth factor beta-1 (TGF-beta-1) chains, which constitute the regulatory and active subunit of TGF-beta-1, respectively. Its function is as follows. Required to maintain the Transforming growth factor beta-1 (TGF-beta-1) chain in a latent state during storage in extracellular matrix. Associates non-covalently with TGF-beta-1 and regulates its activation via interaction with 'milieu molecules', such as LTBP1, LRRC32/GARP and LRRC33/NRROS, that control activation of TGF-beta-1. Interaction with integrins (ITGAV:ITGB6 or ITGAV:ITGB8) results in distortion of the Latency-associated peptide chain and subsequent release of the active TGF-beta-1. Functionally, transforming growth factor beta-1: Multifunctional protein that regulates the growth and differentiation of various cell types and is involved in various processes, such as normal development, immune function, microglia function and responses to neurodegeneration. Activation into mature form follows different steps: following cleavage of the proprotein in the Golgi apparatus, Latency-associated peptide (LAP) and Transforming growth factor beta-1 (TGF-beta-1) chains remain non-covalently linked rendering TGF-beta-1 inactive during storage in extracellular matrix. At the same time, LAP chain interacts with 'milieu molecules', such as ltbp1, lrrc32/garp and lrrc33/nrros that control activation of TGF-beta-1 and maintain it in a latent state during storage in extracellular milieus. TGF-beta-1 is released from LAP by integrins (ITGAV:ITGB6 or ITGAV:ITGB8): integrin-binding to LAP stabilizes an alternative conformation of the LAP bowtie tail and results in distortion of the LAP chain and subsequent release of the active TGF-beta-1. Once activated following release of LAP, TGF-beta-1 acts by binding to TGF-beta receptors (tgfbr1 and tgfbr2), which transduce signal. While expressed by many cells types, TGF-beta-1 only has a very localized range of action within cell environment thanks to fine regulation of its activation by Latency-associated peptide chain (LAP) and 'milieu molecules'. Plays an important role in bone remodeling: acts as a potent stimulator of osteoblastic bone formation. Can promote either T-helper 17 cells (Th17) or regulatory T-cells (Treg) lineage differentiation in a concentration-dependent manner. Can induce epithelial-to-mesenchymal transition (EMT) and cell migration in various cell types. The polypeptide is Transforming growth factor beta-1 proprotein (tgfb1) (Cyprinus carpio (Common carp)).